Reading from the N-terminus, the 458-residue chain is GTPase Der (458 aa).

EngA-type G domains are found at residues 4–169 and 178–353; these read PSIA…PKDL and IMMS…TQHR. Residues 10–17, 57–61, 120–123, 184–191, 231–235, and 296–299 contribute to the GTP site; these read GRPNVGKS, DTGGL, NKCE, DTAGI, and NKWD. The KH-like domain maps to 354 to 439; sequence RRVTTSVVNE…PIILLWRGKQ (86 aa).

It belongs to the TRAFAC class TrmE-Era-EngA-EngB-Septin-like GTPase superfamily. EngA (Der) GTPase family. As to quaternary structure, associates with the 50S ribosomal subunit.

GTPase that plays an essential role in the late steps of ribosome biogenesis. This Prochlorococcus marinus subsp. pastoris (strain CCMP1986 / NIES-2087 / MED4) protein is GTPase Der.